The following is a 364-amino-acid chain: Chorismate synthase (364 aa).

NADP(+)-binding residues include Arg48 and Arg54. Residues 125 to 127, 238 to 239, Gly278, 293 to 297, and Arg319 contribute to the FMN site; these read RSS, NA, and KPTSS.

The protein belongs to the chorismate synthase family. Homotetramer. FMNH2 serves as cofactor.

The catalysed reaction is 5-O-(1-carboxyvinyl)-3-phosphoshikimate = chorismate + phosphate. It participates in metabolic intermediate biosynthesis; chorismate biosynthesis; chorismate from D-erythrose 4-phosphate and phosphoenolpyruvate: step 7/7. In terms of biological role, catalyzes the anti-1,4-elimination of the C-3 phosphate and the C-6 proR hydrogen from 5-enolpyruvylshikimate-3-phosphate (EPSP) to yield chorismate, which is the branch point compound that serves as the starting substrate for the three terminal pathways of aromatic amino acid biosynthesis. This reaction introduces a second double bond into the aromatic ring system. This chain is Chorismate synthase, found in Shewanella woodyi (strain ATCC 51908 / MS32).